Reading from the N-terminus, the 658-residue chain is UvrABC system protein B (658 aa).

In terms of domain architecture, Helicase ATP-binding spans 26-413 (EGINSGKKKQ…SPEVIEQIIR (388 aa)). 39–46 (GATGTGKT) is an ATP binding site. Residues 92 to 115 (YYDYYQPEAYVPQTDTFIEKDAQI) carry the Beta-hairpin motif. The region spanning 430 to 596 (QIDDLLGEIQ…TIQKGVRDVI (167 aa)) is the Helicase C-terminal domain. A UVR domain is found at 622–657 (EKTIAKMEAEMKEAAKALDFERAAELRDLLLELKAE).

This sequence belongs to the UvrB family. In terms of assembly, forms a heterotetramer with UvrA during the search for lesions. Interacts with UvrC in an incision complex.

It localises to the cytoplasm. Functionally, the UvrABC repair system catalyzes the recognition and processing of DNA lesions. A damage recognition complex composed of 2 UvrA and 2 UvrB subunits scans DNA for abnormalities. Upon binding of the UvrA(2)B(2) complex to a putative damaged site, the DNA wraps around one UvrB monomer. DNA wrap is dependent on ATP binding by UvrB and probably causes local melting of the DNA helix, facilitating insertion of UvrB beta-hairpin between the DNA strands. Then UvrB probes one DNA strand for the presence of a lesion. If a lesion is found the UvrA subunits dissociate and the UvrB-DNA preincision complex is formed. This complex is subsequently bound by UvrC and the second UvrB is released. If no lesion is found, the DNA wraps around the other UvrB subunit that will check the other stand for damage. This is UvrABC system protein B from Bacillus cereus (strain ATCC 10987 / NRS 248).